Here is a 282-residue protein sequence, read N- to C-terminus: MPKRKAAGQGDMRQEPKRRSARLSAMLVPVTPEVKPKRTSSSRKMKTKSDMMEENIDTSAQAVAETKQEAVVEEDYNENAKNGEAKITEAPASEKEIVEVKEENIEDATEKGGEKKEAVAAEVKNEEEDQKEDEEDQNEEKGEAGKEDKDEKGEEDGKEDKNGNEKGEDAKEKEDGKKGEDGKGNGEDGKEKGEDEKEEEDRKETGDGKENEDGKEKGDKKEGKDVKVKEDEKEREDGKEDEGGNEEEAGKEKEDLKEEEEGKEEDEIKEDDGKKEEPQSIV.

A disordered region spans residues Met-1–Val-282. At Thr-31 the chain carries Phosphothreonine. The segment covering Lys-37 to Lys-46 has biased composition (basic residues). A Glycyl lysine isopeptide (Lys-Gly) (interchain with G-Cter in SUMO2) cross-link involves residue Lys-67. Residue Tyr-76 is modified to Phosphotyrosine. Basic and acidic residues predominate over residues Lys-81–Val-119. Ser-93 is subject to Phosphoserine. Residue Lys-101 forms a Glycyl lysine isopeptide (Lys-Gly) (interchain with G-Cter in SUMO1); alternate linkage. A Glycyl lysine isopeptide (Lys-Gly) (interchain with G-Cter in SUMO2); alternate cross-link involves residue Lys-101. Residue Lys-124 forms a Glycyl lysine isopeptide (Lys-Gly) (interchain with G-Cter in SUMO2) linkage. The span at Asn-125–Asn-138 shows a compositional bias: acidic residues. Composition is skewed to basic and acidic residues over residues Glu-139–Lys-152 and Lys-158–Leu-256. Acidic residues predominate over residues Lys-257 to Glu-270. Over residues Asp-271–Val-282 the composition is skewed to basic and acidic residues.

Belongs to the HMGN family. Ubiquitously expressed.

It is found in the nucleus. Functionally, preferentially binds to euchromatin and modulates cellular transcription by counteracting linker histone-mediated chromatin compaction. This chain is High mobility group nucleosome-binding domain-containing protein 5 (HMGN5), found in Homo sapiens (Human).